The primary structure comprises 1407 residues: DNA-directed RNA polymerase subunit beta' (1407 aa).

Zn(2+) contacts are provided by Cys70, Cys72, Cys85, and Cys88. Positions 460, 462, and 464 each coordinate Mg(2+). Residues Cys814, Cys888, Cys895, and Cys898 each contribute to the Zn(2+) site.

This sequence belongs to the RNA polymerase beta' chain family. In terms of assembly, the RNAP catalytic core consists of 2 alpha, 1 beta, 1 beta' and 1 omega subunit. When a sigma factor is associated with the core the holoenzyme is formed, which can initiate transcription. Requires Mg(2+) as cofactor. Zn(2+) serves as cofactor.

The catalysed reaction is RNA(n) + a ribonucleoside 5'-triphosphate = RNA(n+1) + diphosphate. In terms of biological role, DNA-dependent RNA polymerase catalyzes the transcription of DNA into RNA using the four ribonucleoside triphosphates as substrates. The chain is DNA-directed RNA polymerase subunit beta' from Citrobacter koseri (strain ATCC BAA-895 / CDC 4225-83 / SGSC4696).